Consider the following 339-residue polypeptide: Phenylalanine--tRNA ligase alpha subunit (339 aa).

Residue Glu254 participates in Mg(2+) binding.

Belongs to the class-II aminoacyl-tRNA synthetase family. Phe-tRNA synthetase alpha subunit type 1 subfamily. In terms of assembly, tetramer of two alpha and two beta subunits. It depends on Mg(2+) as a cofactor.

The protein localises to the cytoplasm. It carries out the reaction tRNA(Phe) + L-phenylalanine + ATP = L-phenylalanyl-tRNA(Phe) + AMP + diphosphate + H(+). In Acetivibrio thermocellus (strain ATCC 27405 / DSM 1237 / JCM 9322 / NBRC 103400 / NCIMB 10682 / NRRL B-4536 / VPI 7372) (Clostridium thermocellum), this protein is Phenylalanine--tRNA ligase alpha subunit.